Reading from the N-terminus, the 558-residue chain is Atlastin-1 (558 aa).

Positions 1–28 are disordered; it reads MAKNRRDRNSWGGFSEKTYEWSSEEEEP. Residues 1-34 are N-terminal hypervariable region (HVR); sequence MAKNRRDRNSWGGFSEKTYEWSSEEEEPVKKAGP. The Cytoplasmic segment spans residues 1–449; that stretch reads MAKNRRDRNS…NIFHAARTPA (449 aa). 3 positions are modified to phosphoserine: serine 10, serine 22, and serine 23. The GB1/RHD3-type G domain maps to 64–309; that stretch reads DKEVVAVSVA…LIPWLLSPES (246 aa). Positions 77, 78, 79, 80, 81, 82, 148, 217, 218, 276, and 279 each coordinate GDP. Residues arginine 77, lysine 78, glycine 79, lysine 80, serine 81, and phenylalanine 82 each contribute to the GTP site. Serine 81 contributes to the Mg(2+) binding site. Arginine 217, aspartate 218, and valine 276 together coordinate GTP. The 3HB (three-helix bundle) domain stretch occupies residues 347 to 438; that stretch reads MLQATAEANN…YIQYIKHNDS (92 aa). N6-acetyllysine is present on lysine 395. Positions 418–439 form a coiled coil; that stretch reads LQQLETEIDELYIQYIKHNDSK. Residues 439 to 447 are linker; it reads KNIFHAART. A helical transmembrane segment spans residues 450-470; sequence TLFVVIFITYVIAGVTGFIGL. Residue aspartate 471 is a topological domain, lumenal. A helical membrane pass occupies residues 472-492; sequence IIASLCNMIMGLTLITLCTWA. Topologically, residues 493-558 are cytoplasmic; it reads YIRYSGEYRE…STEQSEKKKM (66 aa). Positions 521–558 are autoinhibitory domain; the sequence is NEALYKLYSAAATHRHLYHQAFPAPKSESTEQSEKKKM.

This sequence belongs to the TRAFAC class dynamin-like GTPase superfamily. GB1/RHD3 GTPase family. GB1 subfamily. In terms of assembly, monomeric and homodimeric. The homodimer, transiently formed by two molecules on opposing membranes, is the active form mediating ER membrane fusion. Interacts with REEP1, REEP5, RTN3 and RTN4 (via the transmembrane region); these proteins are involved in endoplasmic reticulum tubular network organization. Interacts with ZFYVE27; both proteins are involved in endoplasmic reticulum tubular network organization. Interacts with ARL6IP1; both proteins are involved in endoplasmic reticulum tubular network organization. Interacts with SPAST; the interaction is direct, could recruit SPAST to Golgi membranes. Interacts (via N-terminal region) with MAP4K4 (via CNH regulatory domain). May interact with TMED2. Interacts with CPT1C. In terms of processing, phosphorylated. Phosphorylation, by different kinases, of the N-terminal hypervariable region (HVR) regulates the ATL1-mediated membrane tethering step.

The protein resides in the endoplasmic reticulum membrane. It localises to the golgi apparatus membrane. The protein localises to the cell projection. Its subcellular location is the axon. It carries out the reaction GTP + H2O = GDP + phosphate + H(+). Functionally, atlastin-1 (ATL1) is a membrane-anchored GTPase that mediates the GTP-dependent fusion of endoplasmic reticulum (ER) membranes, maintaining the continuous ER network. It facilitates the formation of three-way junctions where ER tubules intersect. Two atlastin-1 on neighboring ER tubules bind GTP and form loose homodimers through the GB1/RHD3-type G domains and 3HB regions. Upon GTP hydrolysis, the 3HB regions tighten, pulling the membranes together to drive their fusion. After fusion, the homodimer disassembles upon release of inorganic phosphate (Pi). Subsequently, GDP dissociates, resetting the monomers to a conformation ready for a new fusion cycle. May also regulate more or less directly Golgi biogenesis. Indirectly regulates axonal development. This Bos taurus (Bovine) protein is Atlastin-1.